Reading from the N-terminus, the 1098-residue chain is MRTSLQAVALWGQKAPPHSITAIMITDDQRMIVTGSQEGQLCLWNLSHELKISAKELLFGHSASVTCLARARDFSKQPYIVSAAENGEMCVWNVTNGQCVEKATLPYRHTAICYYHCSFRMTGEGWLLCCGEYQDVLIIDAKTLAVVHSFRSSQFPDWINCMCIVHSMRIQDSLLVVSVAGELKVWDLSSSINSIQEKQDVYEKESKFLESLNCQTIRFCTYTERLLLVVFSKCWKVYDYCDFSLLLTEVSRNGQFFAGGEVIAAHRILIWTEDGHSYIYQLLNSGLSKSIYPADGRVLKETIYPHLLCSTSVQENKNRPFVMGYMNERKEPFYKVLFSGEVSGRITLWHIPDVPVSKFDGSPREIPVTATWTLQDNFDKHDTVSQSIIDYFSGLKDGAGTAVVTSSEYIPSLDKLICGCEDGTIIITQALNAAKARLLEGGSLVKDSSPHKVLKGHHQSVTSLLYPHGLSSKLDQSWMLSGDLDSCVILWDIFTEEILHKFFLEAGPVTSLLMSPEKFKLRGAQIICCVCSDHSVALLHLEGRSCLLRARKHLFPVKMIKWHPVENFLIVGCADDSVYIWEIETGTLERHETGERARIILNCCDDSQLVKSVFPIASETLKHKSIEQRSSSPYQLGPLPCPGLQVESSCKVIDAKFCPRPFNVLPVKTKWSNVGFHILLFDLENLVELLLPTPLSDVDSSSSFYGGEVLRRAKSTVEKKTLTLRKSKTACGPLSAEALAKPITESPAQGDNTIKFSAENDGIKRQKKMKISKKMQPKPSRKVDASLTIDTAKLFLSCLLPWGVDDLDYLCIKHLNILKLQGPISLGFASNEDNFSLMLPGWDLCNTEMIKDYSGVNLFSRKVLDLSDKYTATLPNQVGIPRGLENNCDSLQESDTIVYLLSRLFLVNKLVNMPLELACRVGSSFRMECVHNKVRSAGNDILNMSSFYSCLRNGKNESHVPEADLSLLKLISCWRDQSVQVTEAIQAVLWAEVQQHMKSLGKIPVNSQPVSMAENGNCEMKQMLPKLEWTEELELQCIRNTLPLQTPVSPVKHDSNLNSANIQDMEDMPDRCVLEESESPGEPRHHSWIAKVCPCKVS.

WD repeat units lie at residues 15-54 (APPH…KISA), 60-102 (GHSA…CVEK), 158-196 (WINC…NSIQ), 315-359 (ENKN…VSKF), 399-438 (AGTA…KARL), 456-501 (GHHQ…ILHK), 504-549 (LEAG…CLLR), and 552-591 (KHLF…LERH). Residues Ser1077 and Ser1079 each carry the phosphoserine modification.

It is found in the cytoplasmic vesicle. Its function is as follows. Plays a major role in formation of tooth enamel. Specifically required during the maturation phase of amelogenesis for normal formation of the enamel matrix and clearance of enamel proteins. May be involved in localization of the calcium transporter SLC24A4 to the ameloblast cell membrane. This Pongo abelii (Sumatran orangutan) protein is WD repeat-containing protein 72 (WDR72).